A 517-amino-acid chain; its full sequence is Meiosis-specific transcription factor mei4 (517 aa).

The fork-head DNA-binding region spans 81–172 (KPPCSYATLI…QNFVSVRLHR (92 aa)). The interval 170 to 278 (LHRSHSTDSN…PNAETQEDLP (109 aa)) is disordered. Residues 209-223 (NSFNSSTSTSGSSSN) show a composition bias toward low complexity. A compositionally biased stretch (polar residues) spans 230 to 246 (NDASQPSNQDSSLNSNI). The span at 254 to 270 (SNVQSNSSSSENVPKPN) shows a compositional bias: low complexity.

Its subcellular location is the nucleus. Its function is as follows. Functions as a meiosis-specific transcription factor. Binds to the 5'-GTAAAYA-3' consensus sequence of the promoter of the spo6 gene. This Schizosaccharomyces pombe (strain 972 / ATCC 24843) (Fission yeast) protein is Meiosis-specific transcription factor mei4 (mei4).